The sequence spans 404 residues: Argininosuccinate synthase (404 aa).

ATP contacts are provided by residues 13–21 (AYSGGLDTS) and A41. Residues Y93 and S98 each contribute to the L-citrulline site. G123 contributes to the ATP binding site. The L-aspartate site is built by T125, N129, and D130. Residue N129 participates in L-citrulline binding. Residues R133, S182, S191, E267, and Y279 each coordinate L-citrulline.

This sequence belongs to the argininosuccinate synthase family. Type 1 subfamily. In terms of assembly, homotetramer.

It localises to the cytoplasm. The enzyme catalyses L-citrulline + L-aspartate + ATP = 2-(N(omega)-L-arginino)succinate + AMP + diphosphate + H(+). The protein operates within amino-acid biosynthesis; L-arginine biosynthesis; L-arginine from L-ornithine and carbamoyl phosphate: step 2/3. The sequence is that of Argininosuccinate synthase from Moritella profunda.